We begin with the raw amino-acid sequence, 356 residues long: Protein pelota homolog (356 aa).

This sequence belongs to the eukaryotic release factor 1 family. Pelota subfamily. Monomer. The cofactor is a divalent metal cation.

The protein resides in the cytoplasm. Functionally, may function in recognizing stalled ribosomes, interact with stem-loop structures in stalled mRNA molecules, and effect endonucleolytic cleavage of the mRNA. May play a role in the release non-functional ribosomes and degradation of damaged mRNAs. Has endoribonuclease activity. In Pyrococcus horikoshii (strain ATCC 700860 / DSM 12428 / JCM 9974 / NBRC 100139 / OT-3), this protein is Protein pelota homolog.